The chain runs to 1274 residues: ABC multidrug transporter E (1274 aa).

A glycan (N-linked (GlcNAc...) asparagine) is linked at Asn48. In terms of domain architecture, ABC transmembrane type-1 1 spans 120–344 (FCFRVTGLRV…IASPLIIVSK (225 aa)). 4 helical membrane-spanning segments follow: residues 183 to 203 (LALL…LTLV), 205 to 225 (SSAL…MTKI), 280 to 300 (IFGI…SLAF), and 321 to 341 (VFFS…PLII). Positions 377–629 (IIFRDVRFTY…EGGVYRDLVN (253 aa)) constitute an ABC transporter 1 domain. 412–419 (GPSGSGKS) lines the ATP pocket. N-linked (GlcNAc...) asparagine glycosylation is found at Asn473 and Asn580. 2 helical membrane passes run 697–717 (VAVL…SWLF) and 737–757 (FWAL…STVG). Residues 697–984 (VAVLISTAGA…FFSFASNFAQ (288 aa)) form the ABC transmembrane type-1 2 domain. Asn792 is a glycosylation site (N-linked (GlcNAc...) asparagine). Helical transmembrane passes span 818-838 (FPLI…SFGW), 840-860 (LSLV…FMRI), and 924-944 (LIFA…FWYG). The region spanning 1023–1269 (VEFHDVSFRY…KGTYWQMVSS (247 aa)) is the ABC transporter 2 domain. Asn1044 carries N-linked (GlcNAc...) asparagine glycosylation. 1057–1064 (GPSGCGKT) serves as a coordination point for ATP. N-linked (GlcNAc...) asparagine glycosylation is present at Asn1117.

It belongs to the ABC transporter superfamily. ABCB family. Multidrug resistance exporter (TC 3.A.1.201) subfamily.

Its subcellular location is the cell membrane. Functionally, pleiotropic ABC efflux transporter that may be involved in A.fumigatus adaptation to azoles such as vorizonazole. This is ABC multidrug transporter E from Aspergillus fumigatus (strain ATCC MYA-4609 / CBS 101355 / FGSC A1100 / Af293) (Neosartorya fumigata).